Here is a 500-residue protein sequence, read N- to C-terminus: Lysine--tRNA ligase (500 aa).

Residues E410 and E417 each contribute to the Mg(2+) site.

Belongs to the class-II aminoacyl-tRNA synthetase family. Homodimer. Mg(2+) is required as a cofactor.

The protein localises to the cytoplasm. It catalyses the reaction tRNA(Lys) + L-lysine + ATP = L-lysyl-tRNA(Lys) + AMP + diphosphate. This is Lysine--tRNA ligase from Pseudomonas putida (strain ATCC 47054 / DSM 6125 / CFBP 8728 / NCIMB 11950 / KT2440).